The following is a 487-amino-acid chain: N-succinylglutamate 5-semialdehyde dehydrogenase (487 aa).

221-226 is a binding site for NAD(+); sequence GSSRTG. Active-site residues include Glu-244 and Cys-278.

Belongs to the aldehyde dehydrogenase family. AstD subfamily.

It carries out the reaction N-succinyl-L-glutamate 5-semialdehyde + NAD(+) + H2O = N-succinyl-L-glutamate + NADH + 2 H(+). The protein operates within amino-acid degradation; L-arginine degradation via AST pathway; L-glutamate and succinate from L-arginine: step 4/5. Functionally, catalyzes the NAD-dependent reduction of succinylglutamate semialdehyde into succinylglutamate. This Ectopseudomonas mendocina (strain ymp) (Pseudomonas mendocina) protein is N-succinylglutamate 5-semialdehyde dehydrogenase.